The sequence spans 265 residues: Hydroxyethylthiazole kinase (265 aa).

Met-43 provides a ligand contact to substrate. ATP is bound by residues Lys-118 and Thr-165. Gly-192 is a substrate binding site.

It belongs to the Thz kinase family. It depends on Mg(2+) as a cofactor.

The catalysed reaction is 5-(2-hydroxyethyl)-4-methylthiazole + ATP = 4-methyl-5-(2-phosphooxyethyl)-thiazole + ADP + H(+). Its pathway is cofactor biosynthesis; thiamine diphosphate biosynthesis; 4-methyl-5-(2-phosphoethyl)-thiazole from 5-(2-hydroxyethyl)-4-methylthiazole: step 1/1. Functionally, catalyzes the phosphorylation of the hydroxyl group of 4-methyl-5-beta-hydroxyethylthiazole (THZ). The protein is Hydroxyethylthiazole kinase of Pyrococcus furiosus (strain ATCC 43587 / DSM 3638 / JCM 8422 / Vc1).